Reading from the N-terminus, the 199-residue chain is NAD(P)H-quinone oxidoreductase chain 6 (199 aa).

5 helical membrane passes run 9–29 (IVSF…VVLL), 32–52 (VVYS…LYLL), 61–81 (AQVL…IMLV), 102–122 (LVCA…PWAI), and 143–163 (FLLP…GAIV).

The protein belongs to the complex I subunit 6 family.

Its subcellular location is the membrane. The enzyme catalyses a plastoquinone + NADH + (n+1) H(+)(in) = a plastoquinol + NAD(+) + n H(+)(out). The catalysed reaction is a plastoquinone + NADPH + (n+1) H(+)(in) = a plastoquinol + NADP(+) + n H(+)(out). Functionally, NDH-1 shuttles electrons from NAD(P)H, via FMN and iron-sulfur (Fe-S) centers, to quinones in the respiratory chain. The immediate electron acceptor for the enzyme in this species is believed to be plastoquinone. Couples the redox reaction to proton translocation (for every two electrons transferred, four hydrogen ions are translocated across the cytoplasmic membrane), and thus conserves the redox energy in a proton gradient. The sequence is that of NAD(P)H-quinone oxidoreductase chain 6 (ndhG) from Leptolyngbya boryana (Plectonema boryanum).